Reading from the N-terminus, the 93-residue chain is Aspartyl/glutamyl-tRNA(Asn/Gln) amidotransferase subunit C (93 aa).

This sequence belongs to the GatC family. Heterotrimer of A, B and C subunits.

The catalysed reaction is L-glutamyl-tRNA(Gln) + L-glutamine + ATP + H2O = L-glutaminyl-tRNA(Gln) + L-glutamate + ADP + phosphate + H(+). The enzyme catalyses L-aspartyl-tRNA(Asn) + L-glutamine + ATP + H2O = L-asparaginyl-tRNA(Asn) + L-glutamate + ADP + phosphate + 2 H(+). Functionally, allows the formation of correctly charged Asn-tRNA(Asn) or Gln-tRNA(Gln) through the transamidation of misacylated Asp-tRNA(Asn) or Glu-tRNA(Gln) in organisms which lack either or both of asparaginyl-tRNA or glutaminyl-tRNA synthetases. The reaction takes place in the presence of glutamine and ATP through an activated phospho-Asp-tRNA(Asn) or phospho-Glu-tRNA(Gln). The protein is Aspartyl/glutamyl-tRNA(Asn/Gln) amidotransferase subunit C of Helicobacter pylori (strain HPAG1).